The following is a 1147-amino-acid chain: GPI inositol-deacylase (1147 aa).

Positions 1 to 94 (MRRHSSGSSE…RTSPSSPLGL (94 aa)) are disordered. N-linked (GlcNAc...) asparagine glycosylation is present at N23. The span at 28 to 49 (SAKDSRSSAHPTTKLDHNRNAD) shows a compositional bias: basic and acidic residues. The span at 50 to 63 (RPPSFSISRRSSSI) shows a compositional bias: low complexity. The N-linked (GlcNAc...) asparagine glycan is linked to N74. The helical transmembrane segment at 127–147 (AITFSALVAAIVGIGFLVAVL) threads the bilayer. S310 is a catalytic residue. 2 helical membrane passes run 795-815 (LYMR…ALVL) and 843-863 (IPLM…MAPA). N-linked (GlcNAc...) asparagine glycans are attached at residues N865 and N873. Transmembrane regions (helical) follow at residues 893–913 (PLFL…CTVF), 918–938 (LTLT…PGWI), and 965–985 (VLLL…VACL). Residue N1011 is glycosylated (N-linked (GlcNAc...) asparagine). The next 3 helical transmembrane spans lie at 1015-1035 (SIFI…VVWV), 1052-1072 (VLSV…KMIP), and 1084-1104 (LLLF…AYTL).

Belongs to the GPI inositol-deacylase family.

The protein localises to the endoplasmic reticulum membrane. In terms of biological role, involved in inositol deacylation of GPI-anchored proteins which plays important roles in the quality control and ER-associated degradation of GPI-anchored proteins. In Chaetomium globosum (strain ATCC 6205 / CBS 148.51 / DSM 1962 / NBRC 6347 / NRRL 1970) (Soil fungus), this protein is GPI inositol-deacylase (BST1).